A 142-amino-acid polypeptide reads, in one-letter code: Large ribosomal subunit protein uL13 (142 aa).

This sequence belongs to the universal ribosomal protein uL13 family. Part of the 50S ribosomal subunit.

Its function is as follows. This protein is one of the early assembly proteins of the 50S ribosomal subunit, although it is not seen to bind rRNA by itself. It is important during the early stages of 50S assembly. This is Large ribosomal subunit protein uL13 from Caldicellulosiruptor bescii (strain ATCC BAA-1888 / DSM 6725 / KCTC 15123 / Z-1320) (Anaerocellum thermophilum).